Consider the following 516-residue polypeptide: Katanin p60 ATPase-containing subunit A1 (516 aa).

Residues glycine 75–tyrosine 212 are disordered. Composition is skewed to basic and acidic residues over residues alanine 133–proline 143 and arginine 155–alanine 167. Positions arginine 168 to arginine 178 are enriched in gly residues. The segment covering glycine 179–tyrosine 212 has biased composition (basic and acidic residues). Residue glycine 274–threonine 281 coordinates ATP.

Belongs to the AAA ATPase family. Katanin p60 subunit A1 subfamily. In terms of assembly, can homooligomerize into hexameric rings, which may be promoted by interaction with microtubules. Interacts with KATNB1, which may serve as a targeting subunit.

The protein resides in the cytoplasm. Its subcellular location is the cytoskeleton. It is found in the microtubule organizing center. It localises to the centrosome. The protein localises to the spindle pole. It carries out the reaction n ATP + n H2O + a microtubule = n ADP + n phosphate + (n+1) alpha/beta tubulin heterodimers.. With respect to regulation, ATPase activity is stimulated by microtubules, which promote homooligomerization. ATP-dependent microtubule severing is stimulated by interaction with KATNB1. Functionally, catalytic subunit of a complex which severs microtubules in an ATP-dependent manner. Microtubule severing may promote rapid reorganization of cellular microtubule arrays and the release of microtubules from the centrosome following nucleation. In mitotic spindles this could allow depolymerization of the microtubule end proximal to the centrosome, and subsequent poleward microtubule flux. In Strongylocentrotus purpuratus (Purple sea urchin), this protein is Katanin p60 ATPase-containing subunit A1.